We begin with the raw amino-acid sequence, 502 residues long: Cytochrome P450 71B20 (502 aa).

Residues 1-21 traverse the membrane as a helical segment; the sequence is MAISFLCFCLITLASLIFFAK. Residue Cys444 participates in heme binding.

This sequence belongs to the cytochrome P450 family. It depends on heme as a cofactor.

It localises to the membrane. The polypeptide is Cytochrome P450 71B20 (CYP71B20) (Arabidopsis thaliana (Mouse-ear cress)).